We begin with the raw amino-acid sequence, 372 residues long: MAPAPPPAASFSPSEVQRRLAAGACWVRRGARLYDLSSFVRHHPGGEQLLRARAGQDISADLDGPPHRHSANARRWLEQYYVGELRGEQQGSMENEAVALEETQKTDPAMEPRFKVVDWDKDLVDWQKPLLWQVGHLGEKYDEWVHQPVTRPIRLFHSDLIEGLSKTVWYSVPIIWVPLVLYLSWSYYRTFAQGNVRLFTSFTTEYALAVPKSMFPGLFMLGIFLWSLIEYLIHRFLFHMKPPSDSYYLIMLHFVMHGQHHKAPFDGSRLVFPPVPASLVIGVFYLCLQLILPEAVGGTVFAGGLLGYVLYDMTHYYLHFGSPHRGSYLYNLKAHHVKHHFAHQKSGFGISTKLWDYCFHTLIPEKPHLKTQ.

Positions 8–86 constitute a Cytochrome b5 heme-binding domain; it reads AASFSPSEVQ…LEQYYVGELR (79 aa). 2 residues coordinate heme: His43 and His69. 2 helical membrane passes run 168-188 and 213-233; these read VWYSVPIIWVPLVLYLSWSYY and SMFPGLFMLGIFLWSLIEYLI. Residues 219–361 enclose the Fatty acid hydroxylase domain; it reads FMLGIFLWSL…TKLWDYCFHT (143 aa). His234, His239, His257, His260, and His261 together coordinate Zn(2+). The next 2 helical transmembrane spans lie at 271 to 291 and 292 to 312; these read VFPPVPASLVIGVFYLCLQLI and LPEAVGGTVFAGGLLGYVLYD. Zn(2+)-binding residues include His315, His319, His336, His339, and His340.

It belongs to the sterol desaturase family. SCS7 subfamily. The cofactor is Zn(2+).

The protein resides in the endoplasmic reticulum membrane. The protein localises to the microsome membrane. It carries out the reaction a 1,2-saturated fatty acid + 2 Fe(II)-[cytochrome b5] + O2 + 2 H(+) = a (R)-2-hydroxy fatty acid + 2 Fe(III)-[cytochrome b5] + H2O. It catalyses the reaction hexadecanoate + 2 Fe(II)-[cytochrome b5] + O2 + 2 H(+) = (R)-2-hydroxyhexadecanoate + 2 Fe(III)-[cytochrome b5] + H2O. The enzyme catalyses octadecanoate + 2 Fe(II)-[cytochrome b5] + O2 + 2 H(+) = (R)-2-hydroxyoctadecanoate + 2 Fe(III)-[cytochrome b5] + H2O. The catalysed reaction is docosanoate + 2 Fe(II)-[cytochrome b5] + O2 + 2 H(+) = 2-hydroxydocosanoate + 2 Fe(III)-[cytochrome b5] + H2O. It carries out the reaction tetracosanoate + 2 Fe(II)-[cytochrome b5] + O2 + 2 H(+) = (R)-2-hydroxytetracosanoate + 2 Fe(III)-[cytochrome b5] + H2O. It participates in lipid metabolism; fatty acid metabolism. Its pathway is sphingolipid metabolism; galactosylceramide biosynthesis. Functionally, catalyzes the hydroxylation of free fatty acids at the C-2 position to produce 2-hydroxy fatty acids, which are building blocks of sphingolipids and glycosphingolipids common in neural tissue and epidermis. FA2H is stereospecific for the production of (R)-2-hydroxy fatty acids. Plays an essential role in the synthesis of galactosphingolipids of the myelin sheath. Responsible for the synthesis of sphingolipids and glycosphingolipids involved in the formation of epidermal lamellar bodies critical for skin permeability barrier. Participates in the synthesis of glycosphingolipids and a fraction of type II wax diesters in sebaceous gland, specifically regulating hair follicle homeostasis. Involved in the synthesis of sphingolipids of plasma membrane rafts, controlling lipid raft mobility and trafficking of raft-associated proteins. The polypeptide is Fatty acid 2-hydroxylase (FA2H) (Macaca fascicularis (Crab-eating macaque)).